The primary structure comprises 1153 residues: Duffy receptor beta form (1153 aa).

A signal peptide spans 1 to 21 (MEGKKKRPLFFLLVLLLSHKA). The Extracellular segment spans residues 22-1085 (NNVLFERMKG…YECFTKGSST (1064 aa)). N-linked (GlcNAc...) asparagine glycosylation is found at Asn-134, Asn-179, and Asn-202. Intrachain disulfides connect Cys-214–Cys-243 and Cys-227–Cys-234. Asn-252 and Asn-348 each carry an N-linked (GlcNAc...) asparagine glycan. Disulfide bonds link Cys-297–Cys-374, Cys-412–Cys-429, Cys-424–Cys-504, and Cys-433–Cys-502. N-linked (GlcNAc...) asparagine glycosylation is found at Asn-430 and Asn-467. 4 disordered regions span residues 520–545 (LKSAPKLETQRSHSTIQPMSSSGAEK), 565–591 (DEAAKGDGQNGNQTVAESNIKGTDNIE), 612–631 (RGATDITETGEEKLNTSYSG), and 655–981 (ENSE…LYSH). 2 stretches are compositionally biased toward polar residues: residues 531–542 (SHSTIQPMSSSG) and 574–586 (NGNQTVAESNIKG). N-linked (GlcNAc...) asparagine glycosylation is found at Asn-576 and Asn-626. Residues 661–675 (LETKHKIFEPSKDNS) show a composition bias toward basic and acidic residues. The segment covering 677–733 (NSENSGSMEFKATSSNPITEAVESSSAEGQVQEDSAHRSVNTGRDNSTISAATSDDG) has biased composition (polar residues). An N-linked (GlcNAc...) asparagine glycan is attached at Asn-722. Residues 791 to 800 (IDGKNVDIAE) are compositionally biased toward basic and acidic residues. Residues 819–834 (TDNGNVPRSGNKQNEG) are compositionally biased toward polar residues. Asn-847 and Asn-856 each carry an N-linked (GlcNAc...) asparagine glycan. A compositionally biased stretch (basic and acidic residues) spans 867 to 878 (GNEKDFQKHDFM). Residues 884 to 942 (NDQTSSDQTSSDQTSSNQTSSDQTSSNQTSSDQTSSDQISSDQTSSDQTSSNQTSSDQT) are compositionally biased toward low complexity. Asn-900, Asn-910, and Asn-935 each carry an N-linked (GlcNAc...) asparagine glycan. The span at 945 to 969 (TEEHHRDNVRNPEIKSSEDMSKGDF) shows a compositional bias: basic and acidic residues. Polar residues predominate over residues 971-981 (RNSNSNELYSH). Residues 1086–1106 (GIGIVYFATGGAFLIILLLFV) form a helical membrane-spanning segment. At 1107-1153 (SKNVASNDYEEEATFDEFVEYSDDIHRTPLMPNHIEHMQQFTPLDYS) the chain is on the cytoplasmic side.

The protein resides in the membrane. In terms of biological role, binds to Neu5Gc-sialylated receptors on macaque erythrocytes. This is Duffy receptor beta form from Plasmodium knowlesi.